A 225-amino-acid chain; its full sequence is Uracil-DNA glycosylase 1 (225 aa).

The active-site Proton acceptor is D68.

It belongs to the uracil-DNA glycosylase (UDG) superfamily. UNG family.

Its subcellular location is the cytoplasm. It carries out the reaction Hydrolyzes single-stranded DNA or mismatched double-stranded DNA and polynucleotides, releasing free uracil.. Its function is as follows. Excises uracil residues from the DNA which can arise as a result of misincorporation of dUMP residues by DNA polymerase or due to deamination of cytosine. This is Uracil-DNA glycosylase 1 (ung1) from Streptomyces coelicolor (strain ATCC BAA-471 / A3(2) / M145).